A 599-amino-acid polypeptide reads, in one-letter code: Aspartate--tRNA(Asp/Asn) ligase (599 aa).

An L-aspartate-binding site is contributed by glutamate 173. Positions 197–200 are aspartate; that stretch reads QLFK. Residue arginine 219 participates in L-aspartate binding. ATP is bound by residues 219–221 and glutamine 228; that span reads RDE. Histidine 449 contacts L-aspartate. Residue glutamate 482 participates in ATP binding. L-aspartate is bound at residue arginine 489. 534–537 contacts ATP; the sequence is GLDR.

This sequence belongs to the class-II aminoacyl-tRNA synthetase family. Type 1 subfamily. As to quaternary structure, homodimer.

Its subcellular location is the cytoplasm. It catalyses the reaction tRNA(Asx) + L-aspartate + ATP = L-aspartyl-tRNA(Asx) + AMP + diphosphate. Aspartyl-tRNA synthetase with relaxed tRNA specificity since it is able to aspartylate not only its cognate tRNA(Asp) but also tRNA(Asn). Reaction proceeds in two steps: L-aspartate is first activated by ATP to form Asp-AMP and then transferred to the acceptor end of tRNA(Asp/Asn). The protein is Aspartate--tRNA(Asp/Asn) ligase of Marinobacter nauticus (strain ATCC 700491 / DSM 11845 / VT8) (Marinobacter aquaeolei).